A 540-amino-acid polypeptide reads, in one-letter code: DEAD-box ATP-dependent RNA helicase 57 (540 aa).

Residues 24–73 (DFARFRQGPPAPDVASAAAPSPEKKRKRQSKAKAKKSKKRRAEGADSASD) form a disordered region. Over residues 47–64 (KKRKRQSKAKAKKSKKRR) the composition is skewed to basic residues. Positions 101–129 (KSEDSEVVRRRKEVEREIERAAILRKKFD) form a coiled coil. The Q motif motif lies at 146-174 (ELVSRYGCDSYLVGNLSKLGFQEPTPIQR). The Helicase ATP-binding domain occupies 177–347 (IPILLSGREC…RTIMHDAVRV (171 aa)). Position 190 to 197 (190 to 197 (APTGSGKT)) interacts with ATP. The DEAD box motif lies at 294–297 (DESD). The Helicase C-terminal domain maps to 375–519 (ALRQSFAESL…EVPSWIKALP (145 aa)).

The protein belongs to the DEAD box helicase family. DDX52/ROK1 subfamily.

It catalyses the reaction ATP + H2O = ADP + phosphate + H(+). This Oryza sativa subsp. japonica (Rice) protein is DEAD-box ATP-dependent RNA helicase 57.